The primary structure comprises 379 residues: Cytochrome b (379 aa).

Helical transmembrane passes span 33–53, 77–98, 113–133, and 178–198; these read FGSLLGMCLVIQILTGLFLAM, WLIRYLHANGASMFFICLFIHV, WNIGIILLLTTMATAFVGYVL, and FFAFHFILPFIIAAFALVHLL. Residues histidine 83 and histidine 97 each coordinate heme b. Heme b-binding residues include histidine 182 and histidine 196. Histidine 201 is a binding site for a ubiquinone. A run of 4 helical transmembrane segments spans residues 226 to 246, 288 to 308, 320 to 340, and 347 to 367; these read TKDLLGIFLLLLVLMILALFF, LGGVLALVLSILILATFPLLN, VTQVIYWIFIANLLVLTWIGG, and FTTIGQIASITYFAIIIILIP.

It belongs to the cytochrome b family. In terms of assembly, the cytochrome bc1 complex contains 11 subunits: 3 respiratory subunits (MT-CYB, CYC1 and UQCRFS1), 2 core proteins (UQCRC1 and UQCRC2) and 6 low-molecular weight proteins (UQCRH/QCR6, UQCRB/QCR7, UQCRQ/QCR8, UQCR10/QCR9, UQCR11/QCR10 and a cleavage product of UQCRFS1). This cytochrome bc1 complex then forms a dimer. It depends on heme b as a cofactor.

It is found in the mitochondrion inner membrane. Functionally, component of the ubiquinol-cytochrome c reductase complex (complex III or cytochrome b-c1 complex) that is part of the mitochondrial respiratory chain. The b-c1 complex mediates electron transfer from ubiquinol to cytochrome c. Contributes to the generation of a proton gradient across the mitochondrial membrane that is then used for ATP synthesis. This chain is Cytochrome b (MT-CYB), found in Akodon paranaensis (Parana grass mouse).